Reading from the N-terminus, the 457-residue chain is Adenylosuccinate synthetase isozyme 1 (457 aa).

The interval 1–24 (MSGTRASNDRPPGTGGVKRGRLQQ) is disordered. GTP contacts are provided by residues 42–48 (GDEGKGK) and 70–72 (GHT). Catalysis depends on aspartate 43, which acts as the Proton acceptor. Mg(2+) is bound by residues aspartate 43 and glycine 70. Aspartate 43 contacts substrate. Residues 43–46 (DEGK), 68–71 (NAGH), threonine 163, arginine 177, asparagine 256, threonine 271, and arginine 335 contribute to the IMP site. Histidine 71 (proton donor) is an active-site residue. 331–337 (VTTGRKR) lines the substrate pocket. Residues arginine 337, 363–365 (KLD), and 445–448 (GVGK) each bind GTP.

This sequence belongs to the adenylosuccinate synthetase family. Homodimer. Mg(2+) serves as cofactor. High levels in muscle.

Its subcellular location is the cytoplasm. It is found in the membrane. The catalysed reaction is IMP + L-aspartate + GTP = N(6)-(1,2-dicarboxyethyl)-AMP + GDP + phosphate + 2 H(+). It participates in purine metabolism; AMP biosynthesis via de novo pathway; AMP from IMP: step 1/2. With respect to regulation, weakly inhibited by AMP non-competitively to all substrates. Inhibited by IMP non-competitively with respect to GTP. Inhibited by fructose 1,6-bisphosphate competitively with respect to IMP. In terms of biological role, component of the purine nucleotide cycle (PNC), which interconverts IMP and AMP to regulate the nucleotide levels in various tissues, and which contributes to glycolysis and ammoniagenesis. Catalyzes the first committed step in the biosynthesis of AMP from IMP. This Mus musculus (Mouse) protein is Adenylosuccinate synthetase isozyme 1 (Adss1).